The sequence spans 130 residues: Small ribosomal subunit protein uS8 (130 aa).

This sequence belongs to the universal ribosomal protein uS8 family. Part of the 30S ribosomal subunit.

One of the primary rRNA binding proteins, it binds directly to 16S rRNA central domain where it helps coordinate assembly of the platform of the 30S subunit. The polypeptide is Small ribosomal subunit protein uS8 (rps8) (Methanocaldococcus jannaschii (strain ATCC 43067 / DSM 2661 / JAL-1 / JCM 10045 / NBRC 100440) (Methanococcus jannaschii)).